A 205-amino-acid chain; its full sequence is Probable molybdenum cofactor guanylyltransferase (205 aa).

GTP contacts are provided by residues Leu-10–Gly-12, Lys-22, Asp-69, and Asp-100. Asp-100 lines the Mg(2+) pocket.

The protein belongs to the MobA family. It depends on Mg(2+) as a cofactor.

It localises to the cytoplasm. The catalysed reaction is Mo-molybdopterin + GTP + H(+) = Mo-molybdopterin guanine dinucleotide + diphosphate. Transfers a GMP moiety from GTP to Mo-molybdopterin (Mo-MPT) cofactor (Moco or molybdenum cofactor) to form Mo-molybdopterin guanine dinucleotide (Mo-MGD) cofactor. The sequence is that of Probable molybdenum cofactor guanylyltransferase from Natranaerobius thermophilus (strain ATCC BAA-1301 / DSM 18059 / JW/NM-WN-LF).